Here is a 182-residue protein sequence, read N- to C-terminus: Adenine phosphoribosyltransferase (182 aa).

Belongs to the purine/pyrimidine phosphoribosyltransferase family. As to quaternary structure, homodimer.

It is found in the cytoplasm. The catalysed reaction is AMP + diphosphate = 5-phospho-alpha-D-ribose 1-diphosphate + adenine. It functions in the pathway purine metabolism; AMP biosynthesis via salvage pathway; AMP from adenine: step 1/1. Its function is as follows. Catalyzes a salvage reaction resulting in the formation of AMP, that is energically less costly than de novo synthesis. The polypeptide is Adenine phosphoribosyltransferase (Pseudomonas paraeruginosa (strain DSM 24068 / PA7) (Pseudomonas aeruginosa (strain PA7))).